The following is a 1186-amino-acid chain: Tricalbin-1 (1186 aa).

The segment at 1 to 50 (MAKEDTGVTAPKKPETAQVANINGIDKLEPPKTKEETESSKSVSSEKAAH) is disordered. Residues 1-106 (MAKEDTGVTA…NIIPDSLYGD (106 aa)) lie on the Cytoplasmic side of the membrane. Basic and acidic residues predominate over residues 26-39 (DKLEPPKTKEETES). The helical transmembrane segment at 107–127 (WYHSVAIFFIGGVASFALGHY) threads the bilayer. Lysine 128 is a topological domain (extracellular). The helical transmembrane segment at 129–149 (FSMGSAFFVIVITSLLYRTSA) threads the bilayer. At 150–1186 (KKYRGSIREL…HEMGEEETKF (1037 aa)) the chain is on the cytoplasmic side. In terms of domain architecture, SMP-LTD spans 172-375 (DYESLEWLNA…PPFSLQLNIP (204 aa)). 3 C2 domains span residues 366-487 (PPFS…RNLK), 512-636 (EKKL…IKIT), and 640-757 (RPVR…DKYE). A coiled-coil region spans residues 795-822 (LEEIQDLDKVNKKKKALELRKSAIDEKK). A C2 4 domain is found at 976 to 1094 (PIDTKQLPAN…KVEGTTELDV (119 aa)). Serine 1000 is subject to Phosphoserine. Residues aspartate 1008, aspartate 1014, aspartate 1064, aspartate 1066, serine 1069, and aspartate 1072 each coordinate Ca(2+).

Belongs to the tricalbin family. In terms of assembly, interacts with TCB2 via its C-terminal domain. Requires Ca(2+) as cofactor.

The protein localises to the cell membrane. The protein resides in the endoplasmic reticulum membrane. May play a role in membrane trafficking. This Saccharomyces cerevisiae (strain ATCC 204508 / S288c) (Baker's yeast) protein is Tricalbin-1 (TCB1).